Reading from the N-terminus, the 274-residue chain is Probable ribosomal RNA small subunit methyltransferase A (274 aa).

S-adenosyl-L-methionine-binding residues include His-22, Leu-24, Gly-50, Glu-71, Asp-99, and Asn-114.

This sequence belongs to the class I-like SAM-binding methyltransferase superfamily. rRNA adenine N(6)-methyltransferase family. RsmA subfamily.

The protein localises to the cytoplasm. In terms of biological role, specifically dimethylates two adjacent adenosines in the loop of a conserved hairpin near the 3'-end of 16S rRNA in the 30S particle. May play a critical role in biogenesis of 30S subunits. The chain is Probable ribosomal RNA small subunit methyltransferase A from Natronomonas pharaonis (strain ATCC 35678 / DSM 2160 / CIP 103997 / JCM 8858 / NBRC 14720 / NCIMB 2260 / Gabara) (Halobacterium pharaonis).